The chain runs to 249 residues: 2,3-bisphosphoglycerate-dependent phosphoglycerate mutase (249 aa).

Residues 9–16, 22–23, Arg61, 88–91, Lys99, 115–116, and 184–185 each bind substrate; these read RHGQSQWN, TG, ERHY, RR, and GN. The Tele-phosphohistidine intermediate role is filled by His10. Glu88 (proton donor/acceptor) is an active-site residue.

This sequence belongs to the phosphoglycerate mutase family. BPG-dependent PGAM subfamily. Homodimer.

It carries out the reaction (2R)-2-phosphoglycerate = (2R)-3-phosphoglycerate. Its pathway is carbohydrate degradation; glycolysis; pyruvate from D-glyceraldehyde 3-phosphate: step 3/5. In terms of biological role, catalyzes the interconversion of 2-phosphoglycerate and 3-phosphoglycerate. This is 2,3-bisphosphoglycerate-dependent phosphoglycerate mutase from Xylella fastidiosa (strain M23).